The primary structure comprises 654 residues: Phosphate transport system permease protein PstA homolog (654 aa).

Transmembrane regions (helical) follow at residues 22–42 (LAFL…TEAT), 64–84 (AGIW…LIIA), 113–133 (ILSG…LSIF), 143–163 (LSLL…VISL), 266–286 (VLYI…FFAI), 303–323 (ISNF…ALFV), 368–388 (ELIC…FVFI), 417–437 (LVII…IAIW), 453–473 (FVID…GLSF), 486–506 (NGTS…LFLI), 535–555 (IFKI…ILSI), and 613–633 (VVFL…LFLL). Residues 70 to 285 (LLVSFIVSIG…ILVSLLNFFA (216 aa)) enclose the ABC transmembrane type-1 1 domain. The ABC transmembrane type-1 2 domain maps to 413-623 (LVNTLVIILI…VFLILLIFFS (211 aa)).

It belongs to the binding-protein-dependent transport system permease family. CysTW subfamily.

It is found in the cell membrane. In terms of biological role, could be part of a binding-protein-dependent transport system for phosphate; probably responsible for the translocation of the substrate across the membrane. The polypeptide is Phosphate transport system permease protein PstA homolog (pstA) (Mycoplasma genitalium (strain ATCC 33530 / DSM 19775 / NCTC 10195 / G37) (Mycoplasmoides genitalium)).